Here is a 194-residue protein sequence, read N- to C-terminus: N-acetyltransferase (194 aa).

The N-acetyltransferase domain maps to 9–173; that stretch reads PQVRPGIAED…GRYWDVRWYE (165 aa).

This sequence belongs to the acetyltransferase family. PAT/BAR subfamily.

The sequence is that of N-acetyltransferase (nat) from Streptomyces griseus.